Here is an 845-residue protein sequence, read N- to C-terminus: Probable inorganic carbon transporter subunit DabA (845 aa).

Positions 1–20 (MPMASGDESMSARSENPVQS) are disordered. The Zn(2+) site is built by C345, D347, H516, and C531.

This sequence belongs to the inorganic carbon transporter (TC 9.A.2) DabA family. Forms a complex with DabB. Zn(2+) serves as cofactor.

The protein resides in the cell inner membrane. Its function is as follows. Part of an energy-coupled inorganic carbon pump. This chain is Probable inorganic carbon transporter subunit DabA, found in Azotobacter vinelandii (strain DJ / ATCC BAA-1303).